Reading from the N-terminus, the 397-residue chain is 1-deoxy-D-xylulose 5-phosphate reductoisomerase (397 aa).

Positions 12, 13, 14, 15, 38, 39, 40, and 126 each coordinate NADPH. Lysine 127 is a binding site for 1-deoxy-D-xylulose 5-phosphate. Residue glutamate 128 participates in NADPH binding. Aspartate 152 contributes to the Mn(2+) binding site. Positions 153, 154, 188, and 211 each coordinate 1-deoxy-D-xylulose 5-phosphate. A Mn(2+)-binding site is contributed by glutamate 154. Residue glycine 217 coordinates NADPH. 4 residues coordinate 1-deoxy-D-xylulose 5-phosphate: serine 224, asparagine 229, lysine 230, and glutamate 233. Residue glutamate 233 coordinates Mn(2+).

This sequence belongs to the DXR family. It depends on Mg(2+) as a cofactor. The cofactor is Mn(2+).

It catalyses the reaction 2-C-methyl-D-erythritol 4-phosphate + NADP(+) = 1-deoxy-D-xylulose 5-phosphate + NADPH + H(+). The protein operates within isoprenoid biosynthesis; isopentenyl diphosphate biosynthesis via DXP pathway; isopentenyl diphosphate from 1-deoxy-D-xylulose 5-phosphate: step 1/6. In terms of biological role, catalyzes the NADPH-dependent rearrangement and reduction of 1-deoxy-D-xylulose-5-phosphate (DXP) to 2-C-methyl-D-erythritol 4-phosphate (MEP). The protein is 1-deoxy-D-xylulose 5-phosphate reductoisomerase of Haemophilus influenzae (strain 86-028NP).